The chain runs to 1534 residues: DNA polymerase alpha catalytic subunit (1534 aa).

Residues 1–12 show a composition bias toward low complexity; it reads MDEGSADAGASG. Disordered regions lie at residues 1–23, 96–141, and 864–905; these read MDEGSADAGASGRRSRARGSEAV, THRT…LSAA, and FNST…GPSY. The segment covering 116–125 has biased composition (basic residues); it reads RKRKQPRPQS. The span at 127–141 shows a compositional bias: low complexity; sequence RPPQQSAAAASLSAA. Composition is skewed to basic and acidic residues over residues 864-882 and 889-898; these read FNSTKRKMNPDTEAARPDE and DEGHHVDQGK. Residues C1340, C1343, C1383, C1386, C1422, C1427, C1448, and C1454 each contribute to the Zn(2+) site. The CysA-type zinc finger occupies 1340–1386; that stretch reads CPSCSTTFDCPPVSSLIIGSSSGNVSNPNEGNDASINFWRRMRCPRC. The short motif at 1422-1451 is the CysB motif element; that stretch reads CDDEGCKYSTHSVNLRVMGDSERGTICPNY.

This sequence belongs to the DNA polymerase type-B family.

Its subcellular location is the nucleus. The enzyme catalyses DNA(n) + a 2'-deoxyribonucleoside 5'-triphosphate = DNA(n+1) + diphosphate. Its function is as follows. Polymerase alpha in a complex with DNA primase is a replicative polymerase. In Oryza sativa subsp. japonica (Rice), this protein is DNA polymerase alpha catalytic subunit.